Reading from the N-terminus, the 87-residue chain is MKLLFVMMLLFFMFLWYYNVNFLSFLILMEFLVITVLFFIIGYEINSWLFLIFLVFSVCELVLGLSLLVSMNYELGHQKLSVMDLIY.

The next 2 membrane-spanning stretches (helical) occupy residues 22-42 (FLSF…FIIG) and 49-69 (LFLI…SLLV).

It belongs to the complex I subunit 4L family.

It is found in the mitochondrion membrane. The enzyme catalyses a ubiquinone + NADH + 5 H(+)(in) = a ubiquinol + NAD(+) + 4 H(+)(out). Its function is as follows. Core subunit of the mitochondrial membrane respiratory chain NADH dehydrogenase (Complex I) that is believed to belong to the minimal assembly required for catalysis. Complex I functions in the transfer of electrons from NADH to the respiratory chain. The immediate electron acceptor for the enzyme is believed to be ubiquinone. This Apis mellifera ligustica (Common honeybee) protein is NADH-ubiquinone oxidoreductase chain 4L (ND4L).